A 322-amino-acid chain; its full sequence is Agmatinase (322 aa).

Mn(2+)-binding residues include His-136, Asp-160, His-162, Asp-164, Asp-243, and Asp-245.

The protein belongs to the arginase family. Agmatinase subfamily. Mn(2+) serves as cofactor.

The enzyme catalyses agmatine + H2O = urea + putrescine. The protein operates within amine and polyamine biosynthesis; putrescine biosynthesis via agmatine pathway; putrescine from agmatine: step 1/1. Functionally, catalyzes the formation of putrescine from agmatine. The polypeptide is Agmatinase (Chromobacterium violaceum (strain ATCC 12472 / DSM 30191 / JCM 1249 / CCUG 213 / NBRC 12614 / NCIMB 9131 / NCTC 9757 / MK)).